The sequence spans 488 residues: Glutamyl-tRNA(Gln) amidotransferase subunit A (488 aa).

Catalysis depends on charge relay system residues Lys77 and Ser152. Residue Ser176 is the Acyl-ester intermediate of the active site.

Belongs to the amidase family. GatA subfamily. Heterotrimer of A, B and C subunits.

It catalyses the reaction L-glutamyl-tRNA(Gln) + L-glutamine + ATP + H2O = L-glutaminyl-tRNA(Gln) + L-glutamate + ADP + phosphate + H(+). Its function is as follows. Allows the formation of correctly charged Gln-tRNA(Gln) through the transamidation of misacylated Glu-tRNA(Gln) in organisms which lack glutaminyl-tRNA synthetase. The reaction takes place in the presence of glutamine and ATP through an activated gamma-phospho-Glu-tRNA(Gln). In Streptococcus agalactiae serotype Ia (strain ATCC 27591 / A909 / CDC SS700), this protein is Glutamyl-tRNA(Gln) amidotransferase subunit A.